The sequence spans 144 residues: Hexon-interlacing protein (144 aa).

Positions 106-133 form a coiled coil; it reads LTVMLAKLETLTAQLEELSQKVEELADA.

Belongs to the adenoviridae hexon-interlacing protein family. As to quaternary structure, homotrimer. Interacts with hexon protein; this interaction tethers the hexons together. Self-interacts with adjacent proteins. Interacts with kinesin light chain KLC1; this interaction leads to capsid disruption at the nuclear pore complex during virus entry into host cell.

The protein resides in the virion. Its subcellular location is the host nucleus. Its function is as follows. Structural component of the virion that acts as a cement protein on the capsid exterior and forms triskelion structures consisting of three molecules that stabilize three hexon trimers at the center of each icosahedral facet and fixes the peripentonal hexons. Dispensable for assembly. During virus entry, recruits the anterograde motor kinesin-1 to the capsid docked at the nuclear pore complex thereby subjecting the docked capsid to a pulling force. The resulting tension leads to capsid disruption, dispersion of capsid fragments toward cell periphery and eventually viral DNA entry into the host nucleus. The polypeptide is Hexon-interlacing protein (Homo sapiens (Human)).